Reading from the N-terminus, the 372-residue chain is NAD(P)H-quinone oxidoreductase subunit 1 (372 aa).

A run of 8 helical transmembrane segments spans residues 28–48 (IWLP…VLVV), 97–117 (WLFT…YLIV), 130–150 (VGIF…LMSG), 176–196 (LALA…IDIV), 204–224 (ILGW…IAAL), 265–285 (LVLS…FPIP), 308–328 (SLGI…AVLL), and 351–371 (VALV…IAFG).

The protein belongs to the complex I subunit 1 family. As to quaternary structure, NDH-1 is composed of at least 11 different subunits.

It is found in the cellular thylakoid membrane. It catalyses the reaction a plastoquinone + NADH + (n+1) H(+)(in) = a plastoquinol + NAD(+) + n H(+)(out). The catalysed reaction is a plastoquinone + NADPH + (n+1) H(+)(in) = a plastoquinol + NADP(+) + n H(+)(out). NDH-1 shuttles electrons from an unknown electron donor, via FMN and iron-sulfur (Fe-S) centers, to quinones in the respiratory and/or the photosynthetic chain. The immediate electron acceptor for the enzyme in this species is believed to be plastoquinone. Couples the redox reaction to proton translocation, and thus conserves the redox energy in a proton gradient. This Picosynechococcus sp. (strain ATCC 27264 / PCC 7002 / PR-6) (Agmenellum quadruplicatum) protein is NAD(P)H-quinone oxidoreductase subunit 1.